The chain runs to 452 residues: Probable glycine dehydrogenase (decarboxylating) subunit 1 (452 aa).

The protein belongs to the GcvP family. N-terminal subunit subfamily. In terms of assembly, the glycine cleavage system is composed of four proteins: P, T, L and H. In this organism, the P 'protein' is a heterodimer of two subunits.

The catalysed reaction is N(6)-[(R)-lipoyl]-L-lysyl-[glycine-cleavage complex H protein] + glycine + H(+) = N(6)-[(R)-S(8)-aminomethyldihydrolipoyl]-L-lysyl-[glycine-cleavage complex H protein] + CO2. In terms of biological role, the glycine cleavage system catalyzes the degradation of glycine. The P protein binds the alpha-amino group of glycine through its pyridoxal phosphate cofactor; CO(2) is released and the remaining methylamine moiety is then transferred to the lipoamide cofactor of the H protein. This is Probable glycine dehydrogenase (decarboxylating) subunit 1 from Sphingopyxis alaskensis (strain DSM 13593 / LMG 18877 / RB2256) (Sphingomonas alaskensis).